A 182-amino-acid polypeptide reads, in one-letter code: uncharacterized protein (182 aa).

Disordered stretches follow at residues 1–49 (MAAP…DGGS) and 126–171 (QGGH…VHAQ). Residues 17–39 (ELLEKAARLERGPPPRGDPEAVG) show a composition bias toward basic and acidic residues.

This is an uncharacterized protein from Homo sapiens (Human).